Reading from the N-terminus, the 233-residue chain is Protein lin-7 homolog A (233 aa).

The 56-residue stretch at 25 to 80 folds into the L27 domain; the sequence is LDRDVARAIELLEKLQESGEVPVHKLQSLKKVLQSEFCTAIREVYQYMHETITVNG. The 83-residue stretch at 108-190 folds into the PDZ domain; the sequence is VVELPKTDEG…SVKLVVRYTP (83 aa).

It belongs to the lin-7 family. In terms of assembly, forms a complex with CASK and CASKIN1. Component of the brain-specific heterotrimeric complex (LIN-10-LIN-2-LIN-7 complex) composed of at least APBA1, CASK, and LIN7, which associates with the motor protein KIF17 to transport vesicles along microtubules. Can also interact with other modular proteins containing protein-protein interaction domains like PALS1, PALS2, MPP7, DLG1, DLG2 and DLG3 through its L27 domain. Interacts with DLG4, GRIN2B and MARCHF11 as well as CDH1 and CTNNB1, the channels KCNJ12/Kir2.2, KCNJ4/Kir2.3 and probably KCNJ2/Kir2.1 and SLC6A12/BGT-1 via its PDZ domain. The association of LIN7A with cadherin and beta-catenin is calcium-dependent, occurs at synaptic junctions and requires the actin cytoskeleton. Interacts with EGFR, ERBB2, ERBB3 and ERBB4 with both PDZ and KID domains. Associates with KIF17 via APBA1. Interacts with HTR4. Forms a tripartite complex composed of DLG1, MPP7 and LIN7 (LIN7A or LIN7C).

The protein localises to the cell membrane. It localises to the basolateral cell membrane. Its subcellular location is the cell junction. It is found in the postsynaptic density membrane. The protein resides in the tight junction. Its function is as follows. Plays a role in establishing and maintaining the asymmetric distribution of channels and receptors at the plasma membrane of polarized cells. Forms membrane-associated multiprotein complexes that may regulate delivery and recycling of proteins to the correct membrane domains. The tripartite complex composed of LIN7 (LIN7A, LIN7B or LIN7C), CASK and APBA1 associates with the motor protein KIF17 to transport vesicles containing N-methyl-D-aspartate (NMDA) receptor subunit NR2B along microtubules. This complex may have the potential to couple synaptic vesicle exocytosis to cell adhesion in brain. Ensures the proper localization of GRIN2B (subunit 2B of the NMDA receptor) to neuronal postsynaptic density and may function in localizing synaptic vesicles at synapses where it is recruited by beta-catenin and cadherin. Required to localize Kir2 channels, GABA transporter (SLC6A12) and EGFR/ERBB1, ERBB2, ERBB3 and ERBB4 to the basolateral membrane of epithelial cells. This Bos taurus (Bovine) protein is Protein lin-7 homolog A (LIN7A).